The sequence spans 274 residues: 2,3,4,5-tetrahydropyridine-2,6-dicarboxylate N-succinyltransferase (274 aa).

Substrate contacts are provided by Arg103 and Asp140.

This sequence belongs to the transferase hexapeptide repeat family. As to quaternary structure, homotrimer.

It is found in the cytoplasm. It carries out the reaction (S)-2,3,4,5-tetrahydrodipicolinate + succinyl-CoA + H2O = (S)-2-succinylamino-6-oxoheptanedioate + CoA. It participates in amino-acid biosynthesis; L-lysine biosynthesis via DAP pathway; LL-2,6-diaminopimelate from (S)-tetrahydrodipicolinate (succinylase route): step 1/3. This chain is 2,3,4,5-tetrahydropyridine-2,6-dicarboxylate N-succinyltransferase, found in Pasteurella multocida (strain Pm70).